Consider the following 346-residue polypeptide: Probable dual-specificity RNA methyltransferase RlmN (346 aa).

The active-site Proton acceptor is Glu90. Residues 96-330 (TRDRLTVCVS…VSVRASRGLD (235 aa)) enclose the Radical SAM core domain. Residues Cys103 and Cys335 are joined by a disulfide bond. Positions 110, 114, and 117 each coordinate [4Fe-4S] cluster. Residues 157-158 (GE), Ser187, 216-218 (SLH), and Asn292 contribute to the S-adenosyl-L-methionine site. The S-methylcysteine intermediate role is filled by Cys335.

Belongs to the radical SAM superfamily. RlmN family. [4Fe-4S] cluster serves as cofactor.

The protein localises to the cytoplasm. It catalyses the reaction adenosine(2503) in 23S rRNA + 2 reduced [2Fe-2S]-[ferredoxin] + 2 S-adenosyl-L-methionine = 2-methyladenosine(2503) in 23S rRNA + 5'-deoxyadenosine + L-methionine + 2 oxidized [2Fe-2S]-[ferredoxin] + S-adenosyl-L-homocysteine. It carries out the reaction adenosine(37) in tRNA + 2 reduced [2Fe-2S]-[ferredoxin] + 2 S-adenosyl-L-methionine = 2-methyladenosine(37) in tRNA + 5'-deoxyadenosine + L-methionine + 2 oxidized [2Fe-2S]-[ferredoxin] + S-adenosyl-L-homocysteine. Functionally, specifically methylates position 2 of adenine 2503 in 23S rRNA and position 2 of adenine 37 in tRNAs. This is Probable dual-specificity RNA methyltransferase RlmN from Synechococcus sp. (strain RCC307).